The primary structure comprises 287 residues: Ribosomal RNA small subunit methyltransferase I (287 aa).

The protein belongs to the methyltransferase superfamily. RsmI family.

The protein localises to the cytoplasm. The enzyme catalyses cytidine(1402) in 16S rRNA + S-adenosyl-L-methionine = 2'-O-methylcytidine(1402) in 16S rRNA + S-adenosyl-L-homocysteine + H(+). Functionally, catalyzes the 2'-O-methylation of the ribose of cytidine 1402 (C1402) in 16S rRNA. The polypeptide is Ribosomal RNA small subunit methyltransferase I (Streptococcus pyogenes serotype M3 (strain ATCC BAA-595 / MGAS315)).